Here is a 447-residue protein sequence, read N- to C-terminus: 3-phosphoshikimate 1-carboxyvinyltransferase (447 aa).

K36, S37, and R41 together coordinate 3-phosphoshikimate. Phosphoenolpyruvate is bound at residue K36. Phosphoenolpyruvate is bound by residues G109 and R138. Residues S183, Q185, D333, and K360 each coordinate 3-phosphoshikimate. Residue Q185 participates in phosphoenolpyruvate binding. The Proton acceptor role is filled by D333. Phosphoenolpyruvate contacts are provided by R364 and R406.

The protein belongs to the EPSP synthase family. As to quaternary structure, monomer.

It is found in the cytoplasm. The catalysed reaction is 3-phosphoshikimate + phosphoenolpyruvate = 5-O-(1-carboxyvinyl)-3-phosphoshikimate + phosphate. Its pathway is metabolic intermediate biosynthesis; chorismate biosynthesis; chorismate from D-erythrose 4-phosphate and phosphoenolpyruvate: step 6/7. Functionally, catalyzes the transfer of the enolpyruvyl moiety of phosphoenolpyruvate (PEP) to the 5-hydroxyl of shikimate-3-phosphate (S3P) to produce enolpyruvyl shikimate-3-phosphate and inorganic phosphate. The polypeptide is 3-phosphoshikimate 1-carboxyvinyltransferase (Synechocystis sp. (strain ATCC 27184 / PCC 6803 / Kazusa)).